The sequence spans 597 residues: ATP-dependent lipid A-core flippase (597 aa).

Helical transmembrane passes span 26–46, 76–96, 138–158, 164–184, 263–283, and 292–312; these read LWPY…AMAV, WFVP…QYAS, AIVF…VTLV, VVFL…IVAV, QPLT…IAVV, and VGGF…LKHL. The ABC transmembrane type-1 domain maps to 38 to 321; the sequence is IGAIVAMAVS…LMDVNQPLQR (284 aa). The ABC transporter domain maps to 353-590; it reads VEFRDVSFVY…DGLYAHLHRI (238 aa). Residue 390–397 coordinates ATP; that stretch reads GPSGSGKT.

Belongs to the ABC transporter superfamily. Lipid exporter (TC 3.A.1.106) family. In terms of assembly, homodimer.

The protein localises to the cell inner membrane. It catalyses the reaction ATP + H2O + lipid A-core oligosaccharideSide 1 = ADP + phosphate + lipid A-core oligosaccharideSide 2.. Involved in lipopolysaccharide (LPS) biosynthesis. Translocates lipid A-core from the inner to the outer leaflet of the inner membrane. Transmembrane domains (TMD) form a pore in the inner membrane and the ATP-binding domain (NBD) is responsible for energy generation. This chain is ATP-dependent lipid A-core flippase, found in Paraburkholderia xenovorans (strain LB400).